Here is a 241-residue protein sequence, read N- to C-terminus: Endo-chitosanase B (241 aa).

The signal sequence occupies residues Met1 to Ala17. Asn86 is a glycosylation site (N-linked (GlcNAc...) asparagine).

This sequence belongs to the glycosyl hydrolase 75 family.

The protein localises to the secreted. It carries out the reaction Endohydrolysis of beta-(1-&gt;4)-linkages between D-glucosamine residues in a partly acetylated chitosan.. Functionally, chitosanase catalyzing the endo-type cleavage of chitosan, the deacylated form of chitin. Chitosanase may be crucial in the degradation of the deacetylated portion of chitin in the fungal cell wall. Chitoolisaccharides produced by the hydrolysis of partially N-acetylated chitosan are known to have many biological activities, including antibacterial activity, immune-enhancing effects, and elicitor activity. This chain is Endo-chitosanase B (csnB), found in Aspergillus oryzae (strain ATCC 42149 / RIB 40) (Yellow koji mold).